The primary structure comprises 399 residues: Protein IQ-DOMAIN 25 (399 aa).

The Nuclear localization signal signature appears at 1–8 (MRKNLTKL). Calmodulin-binding regions lie at residues 81 to 91 (KERRTHAIAVA) and 99 to 110 (DAAVAAAKAAAA). IQ domains lie at 130–158 (EHRA…GVVK) and 159–181 (IQAL…SMEA). 3 disordered regions span residues 198–219 (NGNA…ENRN), 262–302 (SPLS…SPAR), and 346–377 (LRSH…VRMQ). Residues 285–294 (KFPTAQSTPR) are compositionally biased toward polar residues.

This sequence belongs to the IQD family. As to quaternary structure, binds to multiple calmodulin (CaM) in the presence of Ca(2+) and CaM-like proteins.

It is found in the nucleus. The protein resides in the cell membrane. May be involved in cooperative interactions with calmodulins or calmodulin-like proteins. Recruits calmodulin proteins to microtubules, thus being a potential scaffold in cellular signaling and trafficking. May associate with nucleic acids and regulate gene expression at the transcriptional or post-transcriptional level. The chain is Protein IQ-DOMAIN 25 from Arabidopsis thaliana (Mouse-ear cress).